The chain runs to 542 residues: DM7 family protein CG15333 (542 aa).

Belongs to the DM7 family.

In Drosophila melanogaster (Fruit fly), this protein is DM7 family protein CG15333.